A 530-amino-acid polypeptide reads, in one-letter code: Glucocorticoid modulatory element-binding protein 2 (530 aa).

The 83-residue stretch at 81–163 (EEGENLEAEI…RKIMDSGELD (83 aa)) folds into the SAND domain. C110 serves as a coordination point for Zn(2+). Positions 136, 140, 143, and 154 each coordinate DNA. Residue K155 forms a Glycyl lysine isopeptide (Lys-Gly) (interchain with G-Cter in SUMO1); alternate linkage. K155 participates in a covalent cross-link: Glycyl lysine isopeptide (Lys-Gly) (interchain with G-Cter in SUMO2); alternate. Zn(2+)-binding residues include H167, C171, and C175. The stretch at 304-348 (QMDRSREQYARDLAALEQQCDEHRRRAKELKHKSQHLSNVLMTLT) forms a coiled coil. S373 carries the post-translational modification Phosphoserine.

Homodimer, and heterodimer of GMEB1 and GMEB2. GMEB1 and GMEB2 form the parvovirus initiator complex (PIF). Interacts with the glucocorticoid receptor (NR3C1). May interact with CREB-binding protein (CBP). In terms of tissue distribution, expressed in peripheral blood lymphocytes and fetal liver. Expressed preferentially in reproductive and/or developmentally important cells, such as testis, placenta, bone marrow and fetal tissues.

It localises to the nucleus. The protein resides in the cytoplasm. Functionally, trans-acting factor that binds to glucocorticoid modulatory elements (GME) present in the TAT (tyrosine aminotransferase) promoter and increases sensitivity to low concentrations of glucocorticoids. Also binds to the transferrin receptor promoter. Essential auxiliary factor for the replication of parvoviruses. The chain is Glucocorticoid modulatory element-binding protein 2 (GMEB2) from Homo sapiens (Human).